Reading from the N-terminus, the 460-residue chain is ATP synthase subunit beta (460 aa).

150–157 (GGAGVGKT) contributes to the ATP binding site.

This sequence belongs to the ATPase alpha/beta chains family. F-type ATPases have 2 components, CF(1) - the catalytic core - and CF(0) - the membrane proton channel. CF(1) has five subunits: alpha(3), beta(3), gamma(1), delta(1), epsilon(1). CF(0) has three main subunits: a(1), b(2) and c(9-12). The alpha and beta chains form an alternating ring which encloses part of the gamma chain. CF(1) is attached to CF(0) by a central stalk formed by the gamma and epsilon chains, while a peripheral stalk is formed by the delta and b chains.

The protein resides in the cell inner membrane. The catalysed reaction is ATP + H2O + 4 H(+)(in) = ADP + phosphate + 5 H(+)(out). In terms of biological role, produces ATP from ADP in the presence of a proton gradient across the membrane. The catalytic sites are hosted primarily by the beta subunits. In Citrobacter koseri (strain ATCC BAA-895 / CDC 4225-83 / SGSC4696), this protein is ATP synthase subunit beta.